An 836-amino-acid chain; its full sequence is DNA gyrase subunit A (836 aa).

A Topo IIA-type catalytic domain is found at 46 to 510 (LPDARDGLKP…ISEEIDDESL (465 aa)). Catalysis depends on Y134, which acts as the O-(5'-phospho-DNA)-tyrosine intermediate. The GyrA-box signature appears at 537–543 (QHRGGVG).

The protein belongs to the type II topoisomerase GyrA/ParC subunit family. Heterotetramer, composed of two GyrA and two GyrB chains. In the heterotetramer, GyrA contains the active site tyrosine that forms a transient covalent intermediate with DNA, while GyrB binds cofactors and catalyzes ATP hydrolysis.

It localises to the cytoplasm. It carries out the reaction ATP-dependent breakage, passage and rejoining of double-stranded DNA.. Functionally, a type II topoisomerase that negatively supercoils closed circular double-stranded (ds) DNA in an ATP-dependent manner to modulate DNA topology and maintain chromosomes in an underwound state. Negative supercoiling favors strand separation, and DNA replication, transcription, recombination and repair, all of which involve strand separation. Also able to catalyze the interconversion of other topological isomers of dsDNA rings, including catenanes and knotted rings. Type II topoisomerases break and join 2 DNA strands simultaneously in an ATP-dependent manner. The polypeptide is DNA gyrase subunit A (Mycoplasma genitalium (strain ATCC 33530 / DSM 19775 / NCTC 10195 / G37) (Mycoplasmoides genitalium)).